We begin with the raw amino-acid sequence, 747 residues long: Protein O-mannosyl-transferase 1 (747 aa).

The next 7 helical transmembrane spans lie at 30–50, 90–110, 121–141, 176–196, 205–225, 228–248, and 267–287; these read PLVVTIDINLNLVALTVLGLL, FGHMLLALGGWLGGFDGNFLW, VPVWSLRLLPALAGALSVPMA, LLESILIFFNLLAVLSYLKFF, SVHWWLWLMLTGVSCSCAVGI, MGIFTYLLVLSIAAVHAWHLI, and VALLVVPVFLYLLFFYVHLML. 3 consecutive MIR domains span residues 318-381, 392-449, and 453-513; these read PLEV…VKDP, PRPV…LDIV, and SNQD…VEEH. N-linked (GlcNAc...) asparagine glycosylation is found at asparagine 435, asparagine 471, and asparagine 539. A run of 3 helical transmembrane segments spans residues 597-617, 636-656, and 660-680; these read IVIWTSASLATVAYTLLFFWY, WVLAGALCIGGWALNYLPFFL, and MLFLYHYLPALTFQILLLPIV.

Belongs to the glycosyltransferase 39 family.

The protein resides in the endoplasmic reticulum membrane. The catalysed reaction is a di-trans,poly-cis-dolichyl beta-D-mannosyl phosphate + L-seryl-[protein] = 3-O-(alpha-D-mannosyl)-L-seryl-[protein] + a di-trans,poly-cis-dolichyl phosphate + H(+). The enzyme catalyses a di-trans,poly-cis-dolichyl beta-D-mannosyl phosphate + L-threonyl-[protein] = 3-O-(alpha-D-mannosyl)-L-threonyl-[protein] + a di-trans,poly-cis-dolichyl phosphate + H(+). Its pathway is protein modification; protein glycosylation. In terms of biological role, transfers mannosyl residues to the hydroxyl group of serine or threonine residues. Coexpression of both POMT1 and POMT2 is necessary for enzyme activity, expression of either POMT1 or POMT2 alone is insufficient. Essentially dedicated to O-mannosylation of alpha-DAG1 and few other proteins but not of cadherins and protocaherins. This Rattus norvegicus (Rat) protein is Protein O-mannosyl-transferase 1 (Pomt1).